We begin with the raw amino-acid sequence, 82 residues long: ATP synthase subunit c, chloroplastic (82 aa).

2 helical membrane-spanning segments follow: residues 3 to 23 (PLIA…AAIG) and 57 to 77 (FAFM…LLFA).

This sequence belongs to the ATPase C chain family. F-type ATPases have 2 components, F(1) - the catalytic core - and F(0) - the membrane proton channel. F(1) has five subunits: alpha(3), beta(3), gamma(1), delta(1), epsilon(1). F(0) has four main subunits: a(1), b(1), b'(1) and c(10-14). The alpha and beta chains form an alternating ring which encloses part of the gamma chain. F(1) is attached to F(0) by a central stalk formed by the gamma and epsilon chains, while a peripheral stalk is formed by the delta, b and b' chains.

It localises to the plastid. The protein resides in the chloroplast thylakoid membrane. In terms of biological role, f(1)F(0) ATP synthase produces ATP from ADP in the presence of a proton or sodium gradient. F-type ATPases consist of two structural domains, F(1) containing the extramembraneous catalytic core and F(0) containing the membrane proton channel, linked together by a central stalk and a peripheral stalk. During catalysis, ATP synthesis in the catalytic domain of F(1) is coupled via a rotary mechanism of the central stalk subunits to proton translocation. Functionally, key component of the F(0) channel; it plays a direct role in translocation across the membrane. A homomeric c-ring of between 10-14 subunits forms the central stalk rotor element with the F(1) delta and epsilon subunits. The polypeptide is ATP synthase subunit c, chloroplastic (Oltmannsiellopsis viridis (Marine flagellate)).